Consider the following 190-residue polypeptide: GTP cyclohydrolase 1 (190 aa).

Zn(2+) contacts are provided by cysteine 78, histidine 81, and cysteine 150.

The protein belongs to the GTP cyclohydrolase I family. As to quaternary structure, toroid-shaped homodecamer, composed of two pentamers of five dimers.

The enzyme catalyses GTP + H2O = 7,8-dihydroneopterin 3'-triphosphate + formate + H(+). It functions in the pathway cofactor biosynthesis; 7,8-dihydroneopterin triphosphate biosynthesis; 7,8-dihydroneopterin triphosphate from GTP: step 1/1. With respect to regulation, k(+) ions moderately increases the Vmax, whereas UTP and Ca(2+) and Mg(2+) ions drastically increase the Km for GTP. This is GTP cyclohydrolase 1 (folE) from Bacillus subtilis (strain 168).